We begin with the raw amino-acid sequence, 343 residues long: Pseudaminic acid synthase (343 aa).

The 57-residue stretch at 287 to 343 (SLYASKDIKKGEIFSEENVKSVRPSFGLHPKFYQELLGKKASKDIEFGDALKESDFR) folds into the AFP-like domain.

It belongs to the pseudaminic acid synthase family. It depends on a divalent metal cation as a cofactor.

It carries out the reaction 2,4-diacetamido-2,4,6-trideoxy-beta-L-altrose + phosphoenolpyruvate + H2O = pseudaminate + phosphate. Its function is as follows. Catalyzes the fifth step in the biosynthesis of pseudaminic acid, a sialic-acid-like sugar that is used to modify flagellin. Catalyzes the condensation of phosphoenolpyruvate with 2,4-diacetamido-2,4,6-trideoxy-beta-l-altropyranose, forming pseudaminic acid. The chain is Pseudaminic acid synthase (pseI) from Campylobacter jejuni subsp. jejuni serotype O:23/36 (strain 81-176).